The chain runs to 254 residues: 3-deoxy-manno-octulosonate cytidylyltransferase (254 aa).

This sequence belongs to the KdsB family.

Its subcellular location is the cytoplasm. It catalyses the reaction 3-deoxy-alpha-D-manno-oct-2-ulosonate + CTP = CMP-3-deoxy-beta-D-manno-octulosonate + diphosphate. Its pathway is nucleotide-sugar biosynthesis; CMP-3-deoxy-D-manno-octulosonate biosynthesis; CMP-3-deoxy-D-manno-octulosonate from 3-deoxy-D-manno-octulosonate and CTP: step 1/1. It participates in bacterial outer membrane biogenesis; lipopolysaccharide biosynthesis. In terms of biological role, activates KDO (a required 8-carbon sugar) for incorporation into bacterial lipopolysaccharide in Gram-negative bacteria. This is 3-deoxy-manno-octulosonate cytidylyltransferase from Nitrobacter winogradskyi (strain ATCC 25391 / DSM 10237 / CIP 104748 / NCIMB 11846 / Nb-255).